Reading from the N-terminus, the 186-residue chain is Small ribosomal subunit protein uS19 (186 aa).

The interval 1–95 (MREAIKRYGS…YEELYAQYKQ (95 aa)) is unknown. Positions 96–186 (MTEKKAYVDP…EKTAKVVKKK (91 aa)) are small ribosomal subunit protein uS19.

This sequence belongs to the universal ribosomal protein uS19 family.

Its function is as follows. Protein S19 forms a complex with S13 that binds strongly to the 16S ribosomal RNA. The chain is Small ribosomal subunit protein uS19 from Aquifex aeolicus (strain VF5).